An 860-amino-acid polypeptide reads, in one-letter code: Photoactivated adenylate cyclase subunit beta (860 aa).

The region spanning 56–149 (LRRLMYLSKS…GRMYGDWHMK (94 aa)) is the BLUF 1 domain. A Guanylate cyclase 1 domain is found at 205 to 333 (VVTFIYLVEF…DCINTTSRIA (129 aa)). The disordered stretch occupies residues 420-443 (RPPIFDDTPKGKPRPRTPGYGGRQ). One can recognise a BLUF 2 domain in the interval 471 to 563 (LTTLTYISQA…RAYPAEWTLT (93 aa)). The Guanylate cyclase 2 domain maps to 619–748 (VMLATDICSF…AVSARVMEVE (130 aa)). The segment at 819-860 (KPLALEPEEAKQDYRVSPGRMRHGDSGRRSNSAQGKRSTQVR) is disordered. Residues 847–860 (RSNSAQGKRSTQVR) are compositionally biased toward polar residues.

Belongs to the adenylyl cyclase class-4/guanylyl cyclase family. Heterotetramer of two alpha and two beta subunits. It depends on FAD as a cofactor.

Its subcellular location is the cell projection. It localises to the cilium. The protein resides in the flagellum. It carries out the reaction ATP = 3',5'-cyclic AMP + diphosphate. In terms of biological role, acts as a photoreceptor for the step-up photophobic response. This chain is Photoactivated adenylate cyclase subunit beta, found in Euglena longa (Euglenophycean alga).